Consider the following 182-residue polypeptide: Nucleosome assembly protein 1-like 5 (182 aa).

A disordered region spans residues 1–71 (MADSENQGPA…APKPKNDFIE (71 aa)). Composition is skewed to low complexity over residues 7-21 (QGPA…AAEA) and 28-49 (AEGG…SAAG). Residues 81–107 (VLALKKLQKRCDKIEAKFDKEFQALEK) are a coiled coil. The disordered stretch occupies residues 134–182 (LEGEEEEEEEYEDDEEEGEDEEEEEAAAEAAAGAKHDDAHAEMPDDAKK). The segment covering 135–160 (EGEEEEEEEYEDDEEEGEDEEEEEAA) has biased composition (acidic residues). Over residues 167-182 (AKHDDAHAEMPDDAKK) the composition is skewed to basic and acidic residues.

The protein belongs to the nucleosome assembly protein (NAP) family. As to expression, predominantly expressed in brain.

The protein resides in the nucleus. This is Nucleosome assembly protein 1-like 5 (NAP1L5) from Homo sapiens (Human).